The chain runs to 128 residues: Con-Ins F2b (128 aa).

A signal peptide spans 1–24 (MTTSSYFLLVALGLLLYVCRSSFG). 4 cysteine pairs are disulfide-bonded: Cys-29–Cys-104, Cys-41–Cys-107, Cys-53–Cys-120, and Cys-106–Cys-111. A propeptide spans 59-89 (LQGGTGKKRGRASLLRKRRAFLSMLKARAKR) (c peptide). Glu-115 is subject to 4-carboxyglutamate; partial. Serine amide is present on Ser-127.

The protein belongs to the insulin family. Heterodimer of A and B chains; disulfide-linked. In terms of tissue distribution, expressed by the venom gland.

It localises to the secreted. Its function is as follows. This venom insulin facilitates prey capture by rapidly inducing hypoglycemic shock. Intraperitoneal injection of this peptide into zebrafish lowers blood glucose with the same potency than human insulin. In vivo, when applied to water, this peptide reduces overall locomotor activity of zebrafish larvae, observed as a significant decrease in the percentage of time spent swimming and movement frequency. The sequence is that of Con-Ins F2b from Conus floridulus (Cone snail).